The chain runs to 568 residues: Sulfite reductase [NADPH] hemoprotein beta-component (568 aa).

[4Fe-4S] cluster contacts are provided by Cys-426, Cys-432, Cys-471, and Cys-475. A siroheme-binding site is contributed by Cys-475.

Belongs to the nitrite and sulfite reductase 4Fe-4S domain family. As to quaternary structure, alpha(8)-beta(8). The alpha component is a flavoprotein, the beta component is a hemoprotein. Siroheme is required as a cofactor. [4Fe-4S] cluster serves as cofactor.

It carries out the reaction hydrogen sulfide + 3 NADP(+) + 3 H2O = sulfite + 3 NADPH + 4 H(+). It participates in sulfur metabolism; hydrogen sulfide biosynthesis; hydrogen sulfide from sulfite (NADPH route): step 1/1. Its function is as follows. Component of the sulfite reductase complex that catalyzes the 6-electron reduction of sulfite to sulfide. This is one of several activities required for the biosynthesis of L-cysteine from sulfate. The chain is Sulfite reductase [NADPH] hemoprotein beta-component from Xylella fastidiosa (strain M23).